A 749-amino-acid polypeptide reads, in one-letter code: MAASVVKTPKCPRRGSAKEQQSKASPKSNNESNNWHWWILLASVFLITFATRFYKVTEPDHICWDETHFGKMGSWYINRTFFFDVHPPLGKMLIGLSGYLTGYNGTFPFEKPGDKYNETAYQGMRYFCTTLGALIMPMGFDTVYDLTRSHEAALLSAAYLIFDVGLLTLNQYILLDPILLFFMMGSVWGMVKISKATASGGSYSVRWWFWLFLTGTMLSCTISVKFVGLFVVLLVGLHTATELWLILGDLGQPIVETLKQIACRAIALILWPILLYTLFFYIHLSVLNRSGNGDGFYSSAFQSRLIGNSLYNASMPRDVAYGSVVTIKNHKTGGGYLHSHFHLYPKGSGARQQQITTYTHKDDNNKWVIKPHNKQRLPKDKLQLLRHGDLVRLEHLVTKRNLHSHSEPAPMTKKHLQVTGYGESGVGDANDVWRVLIVGGKVNETVHTVTSRLMLIHYLQNCALTSSGKQLPKWGFEQQEVSCNLNVRDKYAHWNVEDNEHKLLPSVSFSVYAPGFFARFLESHAVMLQGNAGLKPKEGEVTSRPWQWPINYRGQFFSGSSYRIYLLGNPVIWWSNLVFLALFVAVFLGNAILEQRRAGQARALVRSQADSEDSEPSTTDVPLCTCCPEEQQLLSRPREEHRDPLGAAAWLFVGWLLHYLPFWAMGRVLYFHHYFPALIFNSLLTGVMFHHIIQSLPRWIQHVLLGGLLSLIVYSFALFSPLAYGMSGPLANEPNSTMHSLKWLSTWEF.

The disordered stretch occupies residues 1–30; that stretch reads MAASVVKTPKCPRRGSAKEQQSKASPKSNN. Residues 34 to 54 form a helical membrane-spanning segment; sequence NWHWWILLASVFLITFATRFY. Residues Asn-78, Asn-104, and Asn-117 are each glycosylated (N-linked (GlcNAc...) asparagine). Helical transmembrane passes span 126 to 146, 173 to 193, 204 to 224, 226 to 246, and 266 to 286; these read YFCT…VYDL, ILLD…MVKI, SVRW…TISV, FVGL…LWLI, and IALI…HLSV. N-linked (GlcNAc...) asparagine glycans are attached at residues Asn-288 and Asn-312. 3 consecutive MIR domains span residues 316–372, 382–438, and 443–499; these read PRDV…IKPH, LQLL…VLIV, and NETV…VEDN. Asn-443 is a glycosylation site (N-linked (GlcNAc...) asparagine). The next 4 helical transmembrane spans lie at 572 to 592, 645 to 665, 669 to 689, and 703 to 723; these read IWWS…GNAI, LGAA…FWAM, LYFH…GVMF, and VLLG…SPLA. An N-linked (GlcNAc...) asparagine glycan is attached at Asn-735.

Belongs to the glycosyltransferase 39 family. As to quaternary structure, interacts with Rt/POMT1.

It localises to the endoplasmic reticulum membrane. It catalyses the reaction a di-trans,poly-cis-dolichyl beta-D-mannosyl phosphate + L-seryl-[protein] = 3-O-(alpha-D-mannosyl)-L-seryl-[protein] + a di-trans,poly-cis-dolichyl phosphate + H(+). The catalysed reaction is a di-trans,poly-cis-dolichyl beta-D-mannosyl phosphate + L-threonyl-[protein] = 3-O-(alpha-D-mannosyl)-L-threonyl-[protein] + a di-trans,poly-cis-dolichyl phosphate + H(+). It functions in the pathway protein modification; protein glycosylation. In terms of biological role, rt/POMT1 and tw/POMT2 function as a protein O-mannosyltransferase in association with each other to generate and maintain normal muscle development. This chain is Protein O-mannosyl-transferase 2, found in Drosophila pseudoobscura pseudoobscura (Fruit fly).